Reading from the N-terminus, the 151-residue chain is MKVVLLKDVSKIGKKGEIKNVSDGYARNYLIPKGLALEATPRVLKRLEAEKRKKEEEKIQIKTQNEELLKMLKKFLYKIPVKAGESGKLFGALTNSDIAKAVEKIADVNIDKKFIVLEKPIKEIGMYDVLVRLPEGVSGKIKVEVIQEGKN.

This sequence belongs to the bacterial ribosomal protein bL9 family.

Binds to the 23S rRNA. In Thermosipho melanesiensis (strain DSM 12029 / CIP 104789 / BI429), this protein is Large ribosomal subunit protein bL9.